The sequence spans 519 residues: Ribonuclease Y (519 aa).

The helical transmembrane segment at 3-23 (PMTVLISILLTLLGLVVGYYV) threads the bilayer. The 64-residue stretch at 209–272 (TVSVVNLPND…ETARIALDKL (64 aa)) folds into the KH domain. The HD domain occupies 335–428 (VLKHSMEVAF…VAAADALSAA (94 aa)).

Belongs to the RNase Y family.

It is found in the cell membrane. Its function is as follows. Endoribonuclease that initiates mRNA decay. This chain is Ribonuclease Y, found in Bacillus velezensis (strain DSM 23117 / BGSC 10A6 / LMG 26770 / FZB42) (Bacillus amyloliquefaciens subsp. plantarum).